The sequence spans 199 residues: Recombination protein RecR (199 aa).

Residues 56-71 (CRSCFNVAQSELCRIC) form a C4-type zinc finger. Positions 79-174 (SSICVVEEPK…KVTRLASGLP (96 aa)) constitute a Toprim domain.

This sequence belongs to the RecR family.

Its function is as follows. May play a role in DNA repair. It seems to be involved in an RecBC-independent recombinational process of DNA repair. It may act with RecF and RecO. This Frankia casuarinae (strain DSM 45818 / CECT 9043 / HFP020203 / CcI3) protein is Recombination protein RecR.